Here is a 336-residue protein sequence, read N- to C-terminus: Potassium channel subfamily K member 1 (336 aa).

The Cytoplasmic portion of the chain corresponds to 1–20 (MLQSLAGSSCVRLVERHRSA). Residues 21 to 41 (WCFGLLVLGYLLYLVFGAVVF) form a helical membrane-spanning segment. Over 42–103 (SSVELPYEDL…SNASGNWNWD (62 aa)) the chain is Extracellular. Asn95 is a glycosylation site (N-linked (GlcNAc...) asparagine). The segment at residues 104–116 (FTSALFFASTVLS) is an intramembrane region (helical). Residues 117 to 122 (TTGYGH) lie within the membrane without spanning it. The interval 117–122 (TTGYGH) is selectivity filter 1. Topologically, residues 123 to 132 (TVPLSDGGKA) are extracellular. Residues 133–156 (FCIIYSVIGIPFTLLFLTAVVQRI) form a helical membrane-spanning segment. Residues 157–181 (TVHVTRRPVLYFHIRWGFSKQMVGI) lie on the Cytoplasmic side of the membrane. The helical transmembrane segment at 182-202 (VHAVVLGFVTVSCFFFIPAAV) threads the bilayer. The Extracellular segment spans residues 203-211 (FSVLEDDWN). Residues 212–224 (FLESFYFCFISLS) constitute an intramembrane region (helical). The selectivity filter 2 stretch occupies residues 225–230 (TIGLGD). Residues 225 to 231 (TIGLGDY) lie within the membrane without spanning it. Topologically, residues 232-243 (VPGEGYNQKFRE) are extracellular. Residues 244–267 (LYKIGITCYLLLGLIAMLVVLETF) traverse the membrane as a helical segment. The Cytoplasmic portion of the chain corresponds to 268–336 (CELHELKKFR…SAYAEDSASH (69 aa)). Residue Lys274 forms a Glycyl lysine isopeptide (Lys-Gly) (interchain with G-Cter in SUMO) linkage. The tract at residues 293-299 (IVEHDQL) is important for intracellular retention in recycling endosomes.

Belongs to the two pore domain potassium channel (TC 1.A.1.8) family. Homodimer; disulfide-linked. Heterodimer with KCNK2; disulfide-linked. In astrocytes, forms mostly heterodimeric potassium channels with KCNK2, with only a minor proportion of functional channels containing homodimeric KCNK1. Interacts with KCNK3 and KCNK9, forming functional heterodimeric channels. Interacts with GNG4. Identified in a complex with PSD and ARF6; interacts only with PSD that is bound to ARF6. Interacts with UBE2I. Post-translationally, sumoylation is controversial. Sumoylated by UBE2I. Not sumoylated when expressed in xenopus oocytes or mammalian cells. Sumoylation inactivates the channel, but does not interfere with expression at the cell membrane. Sumoylation of a single subunit is sufficient to silence the dimeric channel. Sumoylation of KCNK1 is sufficient to silence heterodimeric channels formed by KCNK1 and KCNK3 or KCNK9. Desumoylated by SENP1; this activates the channel. Desumoylated by SENP1; this strongly increases halothane-mediated activation of heterodimeric channels formed with KCNK9. SENP1 treatment has no effect.

It is found in the cell membrane. The protein localises to the recycling endosome. Its subcellular location is the synaptic cell membrane. The protein resides in the cytoplasmic vesicle. It localises to the perikaryon. It is found in the cell projection. The protein localises to the dendrite. Its subcellular location is the apical cell membrane. The catalysed reaction is K(+)(in) = K(+)(out). It carries out the reaction NH4(+)(in) = NH4(+)(out). It catalyses the reaction Na(+)(in) = Na(+)(out). The enzyme catalyses Rb(+)(in) = Rb(+)(out). The catalysed reaction is Cs(+)(in) = Cs(+)(out). It carries out the reaction Li(+)(in) = Li(+)(out). It catalyses the reaction L-glutamate(out) = L-glutamate(in). The enzyme catalyses chloride(in) = chloride(out). Ion channel that contributes to passive transmembrane potassium transport and to the regulation of the resting membrane potential in brain astrocytes, but also in kidney and in other tissues. Forms dimeric channels through which potassium ions pass in accordance with their electrochemical gradient. The channel is selective for K(+) ions at physiological potassium concentrations and at neutral pH, but becomes permeable to Na(+) at subphysiological K(+) levels and upon acidification of the extracellular medium. The homodimer has very low potassium channel activity, when expressed in heterologous systems, and can function as weakly inward rectifying potassium channel. Channel activity is modulated by activation of serotonin receptors. Heterodimeric channels containing KCNK1 and KCNK2 have much higher activity, and may represent the predominant form in astrocytes. Heterodimeric channels containing KCNK1 and KCNK3 or KCNK9 have much higher activity. Heterodimeric channels formed by KCNK1 and KCNK9 may contribute to halothane-sensitive currents. Mediates outward rectifying potassium currents in dentate gyrus granule cells and contributes to the regulation of their resting membrane potential. Contributes to the regulation of action potential firing in dentate gyrus granule cells and down-regulates their intrinsic excitability. In astrocytes, the heterodimer formed by KCNK1 and KCNK2 is required for rapid glutamate release in response to activation of G-protein coupled receptors, such as F2R and CNR1. Required for normal ion and water transport in the kidney. Contributes to the regulation of the resting membrane potential of pancreatic beta cells. The low channel activity of homodimeric KCNK1 may be due to sumoylation. The low channel activity may be due to rapid internalization from the cell membrane and retention in recycling endosomes. Permeable to monovalent cations with ion selectivity for K(+) &gt; Rb(+) &gt;&gt; NH4(+) &gt;&gt; Cs(+) = Na(+) = Li(+). This chain is Potassium channel subfamily K member 1, found in Cavia porcellus (Guinea pig).